Here is a 798-residue protein sequence, read N- to C-terminus: Nuclear cap-binding protein subunit 1 (798 aa).

The 214-residue stretch at 28–241 folds into the MIF4G domain; that stretch reads EKKLQGVIGK…SLSAQIEALR (214 aa). Residues 663-686 are disordered; that stretch reads NKIKEEDDEESDIKMDEDETKEEK. The segment covering 668 to 682 has biased composition (acidic residues); it reads EDDEESDIKMDEDET.

The protein belongs to the NCBP1 family. As to quaternary structure, component of the nuclear cap-binding complex (CBC), a heterodimer composed of ncbp-1 and ncbp-1 that interacts with m7GpppG-capped RNA.

It is found in the nucleus. Its function is as follows. Component of the cap-binding complex (CBC), which binds cotranscriptionally to the 5'-cap of pre-mRNAs and is involved in various processes such as pre-mRNA splicing and RNA-mediated gene silencing (RNAi). The CBC complex is involved in miRNA-mediated RNA interference and is required for primary microRNAs (miRNAs) processing. In the CBC complex, ncbp-1 does not bind directly capped RNAs (m7GpppG-capped RNA) but is required to stabilize the movement of the N-terminal loop of ncbp-2 and lock the CBC into a high affinity cap-binding state with the cap structure. The protein is Nuclear cap-binding protein subunit 1 (ncbp-1) of Caenorhabditis elegans.